The following is a 97-amino-acid chain: NADH dehydrogenase [ubiquinone] 1 alpha subcomplex subunit 2 (97 aa).

Cys19 and Cys53 form a disulfide bridge.

It belongs to the complex I NDUFA2 subunit family. In terms of assembly, complex I is composed of at least 49 different subunits.

It localises to the mitochondrion inner membrane. Functionally, accessory subunit of the mitochondrial membrane respiratory chain NADH dehydrogenase (Complex I), that is believed not to be involved in catalysis. Complex I functions in the transfer of electrons from NADH to the respiratory chain. The immediate electron acceptor for the enzyme is believed to be ubiquinone. The chain is NADH dehydrogenase [ubiquinone] 1 alpha subcomplex subunit 2 from Arabidopsis thaliana (Mouse-ear cress).